A 436-amino-acid polypeptide reads, in one-letter code: 3-ketoacyl-CoA thiolase (436 aa).

The Acyl-thioester intermediate role is filled by C99. Active-site proton acceptor residues include H392 and C422.

Belongs to the thiolase-like superfamily. Thiolase family. Heterotetramer of two alpha chains (FadJ) and two beta chains (FadI).

Its subcellular location is the cytoplasm. The enzyme catalyses an acyl-CoA + acetyl-CoA = a 3-oxoacyl-CoA + CoA. The protein operates within lipid metabolism; fatty acid beta-oxidation. In terms of biological role, catalyzes the final step of fatty acid oxidation in which acetyl-CoA is released and the CoA ester of a fatty acid two carbons shorter is formed. The protein is 3-ketoacyl-CoA thiolase of Shewanella frigidimarina (strain NCIMB 400).